We begin with the raw amino-acid sequence, 518 residues long: Cytochrome P450 736A117 (518 aa).

An N-linked (GlcNAc...) asparagine glycan is attached at Asn12. Residues 17 to 37 traverse the membrane as a helical segment; that stretch reads FLQPLAFTLLAIFLVLLYTWY. N-linked (GlcNAc...) asparagine glycosylation is found at Asn185, Asn275, and Asn356. Cys460 contributes to the heme binding site.

This sequence belongs to the cytochrome P450 family. The cofactor is heme. As to expression, expressed at similar levels in fruit kernel, seedlings, leaves, stems and buds.

Its subcellular location is the membrane. This is Cytochrome P450 736A117 from Prunus mume (Japanese apricot).